Reading from the N-terminus, the 240-residue chain is Enolase-phosphatase E1 (240 aa).

The protein belongs to the HAD-like hydrolase superfamily. MasA/MtnC family. As to quaternary structure, monomer. It depends on Mg(2+) as a cofactor.

It carries out the reaction 5-methylsulfanyl-2,3-dioxopentyl phosphate + H2O = 1,2-dihydroxy-5-(methylsulfanyl)pent-1-en-3-one + phosphate. It participates in amino-acid biosynthesis; L-methionine biosynthesis via salvage pathway; L-methionine from S-methyl-5-thio-alpha-D-ribose 1-phosphate: step 3/6. The protein operates within amino-acid biosynthesis; L-methionine biosynthesis via salvage pathway; L-methionine from S-methyl-5-thio-alpha-D-ribose 1-phosphate: step 4/6. Bifunctional enzyme that catalyzes the enolization of 2,3-diketo-5-methylthiopentyl-1-phosphate (DK-MTP-1-P) into the intermediate 2-hydroxy-3-keto-5-methylthiopentenyl-1-phosphate (HK-MTPenyl-1-P), which is then dephosphorylated to form the acireductone 1,2-dihydroxy-3-keto-5-methylthiopentene (DHK-MTPene). The protein is Enolase-phosphatase E1 of Saccharopolyspora erythraea (strain ATCC 11635 / DSM 40517 / JCM 4748 / NBRC 13426 / NCIMB 8594 / NRRL 2338).